A 901-amino-acid polypeptide reads, in one-letter code: Cyanophycin synthetase (901 aa).

The 255-residue stretch at 224–478 folds into the ATP-grasp domain; it reads KRILAASGVP…VAGAVMDMLF (255 aa). Position 493–499 (493–499) interacts with ATP; the sequence is GTNGKTT.

It in the C-terminal section; belongs to the MurCDEF family. Homodimer.

It carries out the reaction [L-4-(L-arginin-2-N-yl)aspartate](n) + L-aspartate + ATP = [L-4-(L-arginin-2-N-yl)aspartate](n)-L-aspartate + ADP + phosphate + H(+). The enzyme catalyses [L-4-(L-arginin-2-N-yl)aspartate](n)-L-aspartate + L-arginine + ATP = [L-4-(L-arginin-2-N-yl)aspartate](n+1) + ADP + phosphate + H(+). Catalyzes the ATP-dependent polymerization of arginine and aspartate to multi-L-arginyl-poly-L-aspartic acid (cyanophycin; a water-insoluble reserve polymer). This chain is Cyanophycin synthetase (cphA), found in Nostoc sp. (strain PCC 7120 / SAG 25.82 / UTEX 2576).